Consider the following 785-residue polypeptide: Cullin-3 (785 aa).

Residues 715-777 form the Cullin neddylation domain; the sequence is SRKHQADACI…REYLQRQADN (63 aa). A Glycyl lysine isopeptide (Lys-Gly) (interchain with G-Cter in NEDD8) cross-link involves residue Lys729.

It belongs to the cullin family. Probable component of multiple cullin-RING-based BC3B (BTB-CUL3-BTB) E3 ubiquitin-protein ligase complexes formed by cul-3, rbx-1 and a variable BTB domain-containing protein as adapter and substrate recognition component. Interacts with btb1, btb2, btb3, nedd8 and pip1. In terms of processing, neddylated; enhancing the ubiquitin-ligase activity.

The protein localises to the cytoplasm. Its pathway is protein modification; protein ubiquitination. Probable core component of multiple cullin-RING-based BC3B (BTB-CUL3-BTB) E3 ubiquitin-protein ligase complexes which mediate the ubiquitination and subsequent proteasomal degradation of target proteins. As a scaffold protein may contribute to catalysis through positioning of the substrate and the ubiquitin-conjugating enzyme. The functional specificity of the BC3B complex depends on the substrate recognition component. Involved in ubiquitin-mediated degradation of btb3. This Schizosaccharomyces pombe (strain 972 / ATCC 24843) (Fission yeast) protein is Cullin-3 (cul3).